The following is a 732-amino-acid chain: Polyribonucleotide nucleotidyltransferase (732 aa).

The Mg(2+) site is built by aspartate 515 and aspartate 521. In terms of domain architecture, KH spans 581–641 (PKLELFNVDP…KNVDAAKDYI (61 aa)). The 60-residue stretch at 672–731 (GDEFTGSVKSVVDFGVFIELKDGVDGLLHISKIKSPLNVGDQVKVCVSEQKGNKISLSLV) folds into the S1 motif domain.

This sequence belongs to the polyribonucleotide nucleotidyltransferase family. Mg(2+) serves as cofactor.

The protein resides in the cytoplasm. The enzyme catalyses RNA(n+1) + phosphate = RNA(n) + a ribonucleoside 5'-diphosphate. In terms of biological role, involved in mRNA degradation. Catalyzes the phosphorolysis of single-stranded polyribonucleotides processively in the 3'- to 5'-direction. The polypeptide is Polyribonucleotide nucleotidyltransferase (Campylobacter concisus (strain 13826)).